The chain runs to 77 residues: Sec-independent protein translocase protein TatA (77 aa).

Residues 1 to 21 (MGGLSIWHWLIVLLIVALVFG) form a helical membrane-spanning segment. Residues 40-77 (KDGMREGEAPADPQQLPRSGSVNVDAKDATRSSDSNKA) are disordered. Over residues 64-77 (DAKDATRSSDSNKA) the composition is skewed to basic and acidic residues.

It belongs to the TatA/E family. In terms of assembly, the Tat system comprises two distinct complexes: a TatABC complex, containing multiple copies of TatA, TatB and TatC subunits, and a separate TatA complex, containing only TatA subunits. Substrates initially bind to the TatABC complex, which probably triggers association of the separate TatA complex to form the active translocon.

It is found in the cell inner membrane. Functionally, part of the twin-arginine translocation (Tat) system that transports large folded proteins containing a characteristic twin-arginine motif in their signal peptide across membranes. TatA could form the protein-conducting channel of the Tat system. The chain is Sec-independent protein translocase protein TatA from Burkholderia thailandensis (strain ATCC 700388 / DSM 13276 / CCUG 48851 / CIP 106301 / E264).